Reading from the N-terminus, the 201-residue chain is FMN-dependent NADH:quinone oxidoreductase (201 aa).

FMN contacts are provided by residues serine 10, 16-18 (SQS), 96-99 (MYNF), and 140-143 (SRGG).

It belongs to the azoreductase type 1 family. Homodimer. It depends on FMN as a cofactor.

It carries out the reaction 2 a quinone + NADH + H(+) = 2 a 1,4-benzosemiquinone + NAD(+). It catalyses the reaction N,N-dimethyl-1,4-phenylenediamine + anthranilate + 2 NAD(+) = 2-(4-dimethylaminophenyl)diazenylbenzoate + 2 NADH + 2 H(+). Its function is as follows. Quinone reductase that provides resistance to thiol-specific stress caused by electrophilic quinones. Also exhibits azoreductase activity. Catalyzes the reductive cleavage of the azo bond in aromatic azo compounds to the corresponding amines. This Escherichia coli O6:H1 (strain CFT073 / ATCC 700928 / UPEC) protein is FMN-dependent NADH:quinone oxidoreductase.